The sequence spans 89 residues: DNA-directed RNA polymerase subunit omega (89 aa).

This sequence belongs to the RNA polymerase subunit omega family. In terms of assembly, the RNAP catalytic core consists of 2 alpha, 1 beta, 1 beta' and 1 omega subunit. When a sigma factor is associated with the core the holoenzyme is formed, which can initiate transcription.

It carries out the reaction RNA(n) + a ribonucleoside 5'-triphosphate = RNA(n+1) + diphosphate. Promotes RNA polymerase assembly. Latches the N- and C-terminal regions of the beta' subunit thereby facilitating its interaction with the beta and alpha subunits. The chain is DNA-directed RNA polymerase subunit omega from Clavibacter michiganensis subsp. michiganensis (strain NCPPB 382).